The following is a 63-amino-acid chain: 2-hydroxymuconate tautomerase (63 aa).

Catalysis depends on Pro-2, which acts as the Proton acceptor; via imino nitrogen.

The protein belongs to the 4-oxalocrotonate tautomerase family. Homohexamer.

The enzyme catalyses (2Z,4E)-2-hydroxyhexa-2,4-dienedioate = (3E)-2-oxohex-3-enedioate. It functions in the pathway aromatic compound metabolism; salicylate degradation. Functionally, catalyzes the ketonization of 2-hydroxymuconate stereoselectively to yield 2-oxo-3-hexenedioate. This chain is 2-hydroxymuconate tautomerase (nahJ), found in Stutzerimonas stutzeri (Pseudomonas stutzeri).